Reading from the N-terminus, the 179-residue chain is Insulin-like growth factor 2 (179 aa).

An N-terminal signal peptide occupies residues 1-24; that stretch reads MGITAGKSVLVLLAFLAFASCCYA. The segment at 25 to 52 is b; sequence AYRPSETLCGGELVDTLQFVCGDRGFYF. 3 disulfides stabilise this stretch: cysteine 33–cysteine 71, cysteine 45–cysteine 84, and cysteine 70–cysteine 75. The c stretch occupies residues 53–64; that stretch reads SRPSSRINRRSR. The interval 65–85 is a; sequence GIVEECCFRSCDLALLETYCA. Residues 86–91 are d; the sequence is TPAKSE. Positions 92–179 are cleaved as a propeptide — e peptide; sequence RDVSASTTVL…GGASSKASSD (88 aa). Threonine 106 carries O-linked (GalNAc...) threonine glycosylation. O-linked (GalNAc...) serine glycosylation is present at serine 154. The disordered stretch occupies residues 160–179; sequence ALPTQDPATHGGASSKASSD. A glycan (O-linked (GalNAc...) threonine) is linked at threonine 163.

The protein belongs to the insulin family. In terms of assembly, interacts with MYORG; this interaction is required for IGF2 secretion. Interacts with integrins ITGAV:ITGB3 and ITGA6:ITGB4; integrin-binding is required for IGF2 signaling. Interacts with IGFBP2. Proteolytically processed by PCSK4, proIGF2 is cleaved at Arg-128 and Arg-92 to generate big-IGF2 and mature IGF2.

The protein localises to the secreted. The insulin-like growth factors possess growth-promoting activity. Major fetal growth hormone in mammals. Plays a key role in regulating fetoplacental development. IGF2 is influenced by placental lactogen. Also involved in tissue differentiation. In adults, involved in glucose metabolism in adipose tissue, skeletal muscle and liver. Acts as a ligand for integrin which is required for IGF2 signaling. Positively regulates myogenic transcription factor MYOD1 function by facilitating the recruitment of transcriptional coactivators, thereby controlling muscle terminal differentiation. Inhibits myoblast differentiation and modulates metabolism via increasing the mitochondrial respiration rate. In terms of biological role, preptin undergoes glucose-mediated co-secretion with insulin, and acts as a physiological amplifier of glucose-mediated insulin secretion. Exhibits osteogenic properties by increasing osteoblast mitogenic activity through phosphoactivation of MAPK1 and MAPK3. This chain is Insulin-like growth factor 2, found in Bos taurus (Bovine).